The following is a 297-amino-acid chain: Calponin-1 (297 aa).

Positions 28–131 (HQREQELREW…STLLALASMA (104 aa)) constitute a Calponin-homology (CH) domain. Calponin-like repeat units follow at residues 164–189 (IGLQ…RHLY), 204–229 (ISLQ…RQIF), and 243–268 (VSLQ…RQVY). Thr170 is modified (phosphothreonine; by ROCK2). Phosphoserine; by ROCK2 is present on Ser175. A phosphothreonine; by ROCK2 mark is found at Thr180 and Thr184. Residue Thr259 is modified to Phosphothreonine; by ROCK2.

It belongs to the calponin family. As to quaternary structure, part of cGMP kinase signaling complex at least composed of ACTA2/alpha-actin, CNN1/calponin H1, PLN/phospholamban, PRKG1 and ITPR1. In terms of tissue distribution, smooth muscle, and tissues containing significant amounts of smooth muscle.

Functionally, thin filament-associated protein that is implicated in the regulation and modulation of smooth muscle contraction. It is capable of binding to actin, calmodulin and tropomyosin. The interaction of calponin with actin inhibits the actomyosin Mg-ATPase activity. The chain is Calponin-1 (CNN1) from Homo sapiens (Human).